We begin with the raw amino-acid sequence, 342 residues long: Anthranilate phosphoribosyltransferase (342 aa).

5-phospho-alpha-D-ribose 1-diphosphate is bound by residues Gly-83, 86-87 (GD), Thr-91, 93-96 (NIST), 111-119 (KHGGRSVSS), and Ser-123. Gly-83 provides a ligand contact to anthranilate. Ser-95 contacts Mg(2+). Arg-169 provides a ligand contact to anthranilate. The Mg(2+) site is built by Asp-228 and Glu-229.

The protein belongs to the anthranilate phosphoribosyltransferase family. Homodimer. Requires Mg(2+) as cofactor.

The enzyme catalyses N-(5-phospho-beta-D-ribosyl)anthranilate + diphosphate = 5-phospho-alpha-D-ribose 1-diphosphate + anthranilate. Its pathway is amino-acid biosynthesis; L-tryptophan biosynthesis; L-tryptophan from chorismate: step 2/5. Catalyzes the transfer of the phosphoribosyl group of 5-phosphorylribose-1-pyrophosphate (PRPP) to anthranilate to yield N-(5'-phosphoribosyl)-anthranilate (PRA). The polypeptide is Anthranilate phosphoribosyltransferase (Chromobacterium violaceum (strain ATCC 12472 / DSM 30191 / JCM 1249 / CCUG 213 / NBRC 12614 / NCIMB 9131 / NCTC 9757 / MK)).